The following is a 97-amino-acid chain: Pollen allergen Lol p 2-A (97 aa).

The 82-residue stretch at 15 to 96 (KNLALSIKYN…DFKVGTTYKP (82 aa)) folds into the Expansin-like CBD domain.

This sequence belongs to the expansin family. Expansin B subfamily.

The protein localises to the secreted. The polypeptide is Pollen allergen Lol p 2-A (Lolium perenne (Perennial ryegrass)).